The primary structure comprises 34 residues: N(4)-(Beta-N-acetylglucosaminyl)-L-asparaginase (34 aa).

Catalysis depends on T18, which acts as the Nucleophile.

It belongs to the Ntn-hydrolase family. Heterotetramer of two alpha and two beta chains arranged as a dimer of alpha/beta heterodimers. Post-translationally, cleaved into an alpha and beta chain by autocatalysis; this activates the enzyme. The N-terminal residue of the beta subunit is responsible for the nucleophile hydrolase activity. N-glycosylated.

It is found in the lysosome. It carries out the reaction N(4)-(beta-N-acetyl-D-glucosaminyl)-L-asparagine + H2O = N-acetyl-beta-D-glucosaminylamine + L-aspartate + H(+). Functionally, cleaves the GlcNAc-Asn bond which joins oligosaccharides to the peptide of asparagine-linked glycoproteins. The protein is N(4)-(Beta-N-acetylglucosaminyl)-L-asparaginase (AGA) of Sus scrofa (Pig).